The chain runs to 438 residues: Gamma-glutamyl phosphate reductase (438 aa).

The segment at 1–21 is disordered; it reads MTAQTSSDVTDQKTDLTRESE. Basic and acidic residues predominate over residues 10 to 21; it reads TDQKTDLTRESE.

It belongs to the gamma-glutamyl phosphate reductase family.

Its subcellular location is the cytoplasm. It catalyses the reaction L-glutamate 5-semialdehyde + phosphate + NADP(+) = L-glutamyl 5-phosphate + NADPH + H(+). It participates in amino-acid biosynthesis; L-proline biosynthesis; L-glutamate 5-semialdehyde from L-glutamate: step 2/2. Functionally, catalyzes the NADPH-dependent reduction of L-glutamate 5-phosphate into L-glutamate 5-semialdehyde and phosphate. The product spontaneously undergoes cyclization to form 1-pyrroline-5-carboxylate. The protein is Gamma-glutamyl phosphate reductase of Corynebacterium efficiens (strain DSM 44549 / YS-314 / AJ 12310 / JCM 11189 / NBRC 100395).